Here is a 325-residue protein sequence, read N- to C-terminus: Porphobilinogen deaminase (325 aa).

An S-(dipyrrolylmethanemethyl)cysteine modification is found at cysteine 253.

It belongs to the HMBS family. Requires dipyrromethane as cofactor.

It carries out the reaction 4 porphobilinogen + H2O = hydroxymethylbilane + 4 NH4(+). It participates in porphyrin-containing compound metabolism; protoporphyrin-IX biosynthesis; coproporphyrinogen-III from 5-aminolevulinate: step 2/4. Its function is as follows. Tetrapolymerization of the monopyrrole PBG into the hydroxymethylbilane pre-uroporphyrinogen in several discrete steps. In Dictyostelium discoideum (Social amoeba), this protein is Porphobilinogen deaminase (hemC).